A 236-amino-acid polypeptide reads, in one-letter code: Small ribosomal subunit protein mS41 (236 aa).

It belongs to the mitochondrion-specific ribosomal protein mS41 family. As to quaternary structure, component of the mitochondrial small ribosomal subunit (mt-SSU). Mature N.crassa 74S mitochondrial ribosomes consist of a small (37S) and a large (54S) subunit. The 37S small subunit contains a 16S ribosomal RNA (16S mt-rRNA) and 32 different proteins. The 54S large subunit contains a 23S rRNA (23S mt-rRNA) and 42 different proteins.

The protein resides in the mitochondrion. Functionally, component of the mitochondrial ribosome (mitoribosome), a dedicated translation machinery responsible for the synthesis of mitochondrial genome-encoded proteins, including at least some of the essential transmembrane subunits of the mitochondrial respiratory chain. The mitoribosomes are attached to the mitochondrial inner membrane and translation products are cotranslationally integrated into the membrane. This chain is Small ribosomal subunit protein mS41 (fyv4), found in Neurospora crassa (strain ATCC 24698 / 74-OR23-1A / CBS 708.71 / DSM 1257 / FGSC 987).